The following is a 646-amino-acid chain: Ribonuclease Y (646 aa).

Residues 4 to 24 (VLVVLLSLVLVVLSVLILAVA) form a helical membrane-spanning segment. 2 disordered regions span residues 43–62 (PRTP…DFDE) and 69–118 (LPAP…HGGS). The KH domain occupies 336-402 (VVTVLHLPGD…RITLAALVSD (67 aa)). In terms of domain architecture, HD spans 462 to 555 (VLAHLIESAH…TQAADQISGG (94 aa)).

This sequence belongs to the RNase Y family.

It localises to the cell membrane. Endoribonuclease that initiates mRNA decay. The protein is Ribonuclease Y of Frankia casuarinae (strain DSM 45818 / CECT 9043 / HFP020203 / CcI3).